The sequence spans 68 residues: Beta-defensin 1 (68 aa).

The first 21 residues, 1–21, serve as a signal peptide directing secretion; it reads MRTSYLLLFILCLVLCDMDSG. A propeptide spanning residues 22-32 is cleaved from the precursor; the sequence is DTFLTGLGHRS. 3 cysteine pairs are disulfide-bonded: C37/C66, C44/C59, and C49/C67.

Belongs to the beta-defensin family. As to quaternary structure, monomer. Homodimer.

It localises to the secreted. The protein localises to the membrane. In terms of biological role, has bactericidal activity. May act as a ligand for C-C chemokine receptor CCR6. Positively regulates the sperm motility and bactericidal activity in a CCR6-dependent manner. Binds to CCR6 and triggers Ca2+ mobilization in the sperm which is important for its motility. The sequence is that of Beta-defensin 1 (DEFB1) from Saguinus oedipus (Cotton-top tamarin).